We begin with the raw amino-acid sequence, 363 residues long: Chorismate synthase (363 aa).

Residues Arg-48 and Arg-54 each contribute to the NADP(+) site. FMN contacts are provided by residues 125 to 127 (RSS), 237 to 238 (NA), Gly-277, 292 to 296 (KPTSS), and Arg-318.

This sequence belongs to the chorismate synthase family. Homotetramer. The cofactor is FMNH2.

The catalysed reaction is 5-O-(1-carboxyvinyl)-3-phosphoshikimate = chorismate + phosphate. It functions in the pathway metabolic intermediate biosynthesis; chorismate biosynthesis; chorismate from D-erythrose 4-phosphate and phosphoenolpyruvate: step 7/7. Catalyzes the anti-1,4-elimination of the C-3 phosphate and the C-6 proR hydrogen from 5-enolpyruvylshikimate-3-phosphate (EPSP) to yield chorismate, which is the branch point compound that serves as the starting substrate for the three terminal pathways of aromatic amino acid biosynthesis. This reaction introduces a second double bond into the aromatic ring system. The protein is Chorismate synthase of Pseudomonas syringae pv. syringae (strain B728a).